Consider the following 450-residue polypeptide: Homogentisate 1,2-dioxygenase (450 aa).

His-304 (proton acceptor) is an active-site residue. 2 residues coordinate Fe cation: His-347 and Glu-353. Homogentisate is bound by residues Tyr-362 and His-383. Position 383 (His-383) interacts with Fe cation.

This sequence belongs to the homogentisate dioxygenase family. In terms of assembly, hexamer; dimer of trimers. It depends on Fe cation as a cofactor.

It catalyses the reaction homogentisate + O2 = 4-maleylacetoacetate + H(+). It participates in amino-acid degradation; L-phenylalanine degradation; acetoacetate and fumarate from L-phenylalanine: step 4/6. In terms of biological role, involved in the catabolism of homogentisate (2,5-dihydroxyphenylacetate or 2,5-OH-PhAc), a central intermediate in the degradation of phenylalanine and tyrosine. Catalyzes the oxidative ring cleavage of the aromatic ring of homogentisate to yield maleylacetoacetate. The polypeptide is Homogentisate 1,2-dioxygenase (Burkholderia mallei (strain NCTC 10229)).